The sequence spans 551 residues: Glucose-6-phosphate isomerase (551 aa).

Residue glutamate 356 is the Proton donor of the active site. Active-site residues include histidine 387 and lysine 515.

This sequence belongs to the GPI family.

The protein resides in the cytoplasm. The catalysed reaction is alpha-D-glucose 6-phosphate = beta-D-fructose 6-phosphate. Its pathway is carbohydrate biosynthesis; gluconeogenesis. The protein operates within carbohydrate degradation; glycolysis; D-glyceraldehyde 3-phosphate and glycerone phosphate from D-glucose: step 2/4. Catalyzes the reversible isomerization of glucose-6-phosphate to fructose-6-phosphate. This chain is Glucose-6-phosphate isomerase, found in Blochmanniella pennsylvanica (strain BPEN).